We begin with the raw amino-acid sequence, 396 residues long: Argininosuccinate synthase (396 aa).

ATP is bound at residue 9-17; that stretch reads AFSGGLDTT. Tyrosine 86 is an L-citrulline binding site. Glycine 116 lines the ATP pocket. L-aspartate is bound by residues threonine 118, asparagine 122, and aspartate 123. Asparagine 122 is an L-citrulline binding site. Positions 126, 172, 181, 254, and 266 each coordinate L-citrulline.

Belongs to the argininosuccinate synthase family. Type 1 subfamily. As to quaternary structure, homotetramer.

The protein localises to the cytoplasm. It carries out the reaction L-citrulline + L-aspartate + ATP = 2-(N(omega)-L-arginino)succinate + AMP + diphosphate + H(+). It functions in the pathway amino-acid biosynthesis; L-arginine biosynthesis; L-arginine from L-ornithine and carbamoyl phosphate: step 2/3. This is Argininosuccinate synthase from Halobacterium salinarum (strain ATCC 700922 / JCM 11081 / NRC-1) (Halobacterium halobium).